The primary structure comprises 229 residues: Large ribosomal subunit protein uL1 (229 aa).

This sequence belongs to the universal ribosomal protein uL1 family. In terms of assembly, part of the 50S ribosomal subunit.

Binds directly to 23S rRNA. The L1 stalk is quite mobile in the ribosome, and is involved in E site tRNA release. Its function is as follows. Protein L1 is also a translational repressor protein, it controls the translation of the L11 operon by binding to its mRNA. This Streptococcus equi subsp. equi (strain 4047) protein is Large ribosomal subunit protein uL1.